A 1220-amino-acid polypeptide reads, in one-letter code: MGDMANNSVAYSGVKNSLKEANHDGDFGITLAELRALMELRSTDALRKIQESYGDVYGICTKLKTSPNEGLSGNPADLERREAVFGKNFIPPKKPKTFLQLVWEALQDVTLIILEIAAIVSLGLSFYQPPEGDNALCGEVSVGEEEGEGETGWIEGAAILLSVVCVVLVTAFNDWSKEKQFRGLQSRIEQEQKFTVIRGGQVIQIPVADITVGDIAQVKYGDLLPADGILIQGNDLKIDESSLTGESDHVKKSLDKDPLLLSGTHVMEGSGRMVVTAVGVNSQTGIIFTLLGAGGEEEEKKDEKKKEKKNKKQDGAIENRNKAKAQDGAAMEMQPLKSEEGGDGDEKDKKKANLPKKEKSVLQGKLTKLAVQIGKAGLLMSAITVIILVLYFVIDTFWVQKRPWLAECTPIYIQYFVKFFIIGVTVLVVAVPEGLPLAVTISLAYSVKKMMKDNNLVRHLDACETMGNATAICSDKTGTLTMNRMTVVQAYINEKHYKKVPEPEAIPPNILSYLVTGISVNCAYTSKILPPEKEGGLPRHVGNKTECALLGFLLDLKRDYQDVRNEIPEEALYKVYTFNSVRKSMSTVLKNSDGSFRIFSKGASEIILKKCFKILSANGEAKVFRPRDRDDIVKTVIEPMASEGLRTICLAFRDFPAGEPEPEWDNENDVVTGLTCIAVVGIEDPVRPEVPEAIKKCQRAGITVRMVTGDNINTARAIATKCGILHPGEDFLCLEGKDFNRRIRNEKGEIEQERIDKIWPKLRVLARSSPTDKHTLVKGIIDSTVSEQRQVVAVTGDGTNDGPALKKADVGFAMGIAGTDVAKEASDIILTDDNFTSIVKAVMWGRNVYDSISKFLQFQLTVNVVAVIVAFTGACITQDSPLKAVQMLWVNLIMDTLASLALATEPPTESLLLRKPYGRNKPLISRTMMKNILGHAFYQLVVVFTLLFAGEKFFDIDSGRNAPLHAPPSEHYTIVFNTFVLMQLFNEINARKIHGERNVFEGIFNNAIFCTIVLGTFVVQIIIVQFGGKPFSCSELSIEQWLWSIFLGMGTLLWGQLISTIPTSRLKFLKEAGHGTQKEEIPEEELAEDVEEIDHAERELRRGQILWFRGLNRIQTQIRVVNAFRSSLYEGLEKPESRSSIHNFMTHPEFRIEDSEPLIPLIDDTDAEDDAPTKRNSSPPPSPNKNNNAVDSGIHLTIEMNKSATSSSPGSPLHSLETSL.

Residue glycine 2 is modified to N-acetylglycine. The Cytoplasmic segment spans residues 2–105 (GDMANNSVAY…KTFLQLVWEA (104 aa)). Phosphoserine occurs at positions 8 and 17. Residues 106-126 (LQDVTLIILEIAAIVSLGLSF) form a helical membrane-spanning segment. Topologically, residues 127-154 (YQPPEGDNALCGEVSVGEEEGEGETGWI) are extracellular. Residues 155–175 (EGAAILLSVVCVVLVTAFNDW) traverse the membrane as a helical segment. Residues 176 to 366 (SKEKQFRGLQ…KEKSVLQGKL (191 aa)) are Cytoplasmic-facing. Positions 297–356 (EEEKKDEKKKEKKNKKQDGAIENRNKAKAQDGAAMEMQPLKSEEGGDGDEKDKKKANLPK) are disordered. 2 stretches are compositionally biased toward basic and acidic residues: residues 312–325 (KQDG…KAKA) and 337–356 (KSEE…NLPK). The residue at position 338 (serine 338) is a Phosphoserine. Residues 367 to 386 (TKLAVQIGKAGLLMSAITVI) traverse the membrane as a helical segment. The Extracellular portion of the chain corresponds to 387 to 418 (ILVLYFVIDTFWVQKRPWLAECTPIYIQYFVK). A helical transmembrane segment spans residues 419 to 439 (FFIIGVTVLVVAVPEGLPLAV). The Cytoplasmic portion of the chain corresponds to 440–855 (TISLAYSVKK…RNVYDSISKF (416 aa)). Aspartate 475 acts as the 4-aspartylphosphate intermediate in catalysis. Mg(2+)-binding residues include aspartate 475, threonine 477, and aspartate 797. A helical transmembrane segment spans residues 856–876 (LQFQLTVNVVAVIVAFTGACI). Topologically, residues 877-882 (TQDSPL) are extracellular. The chain crosses the membrane as a helical span at residues 883–903 (KAVQMLWVNLIMDTLASLALA). Topologically, residues 904–927 (TEPPTESLLLRKPYGRNKPLISRT) are cytoplasmic. Residues 928 to 948 (MMKNILGHAFYQLVVVFTLLF) traverse the membrane as a helical segment. The Extracellular segment spans residues 949–971 (AGEKFFDIDSGRNAPLHAPPSEH). Residues 972-991 (YTIVFNTFVLMQLFNEINAR) traverse the membrane as a helical segment. The Cytoplasmic portion of the chain corresponds to 992-1005 (KIHGERNVFEGIFN). The chain crosses the membrane as a helical span at residues 1006-1027 (NAIFCTIVLGTFVVQIIIVQFG). Topologically, residues 1028-1039 (GKPFSCSELSIE) are extracellular. A helical membrane pass occupies residues 1040–1060 (QWLWSIFLGMGTLLWGQLIST). At 1061 to 1220 (IPTSRLKFLK…SPLHSLETSL (160 aa)) the chain is on the cytoplasmic side. Residues 1100–1117 (LRRGQILWFRGLNRIQTQ) are calmodulin-binding subdomain A. Threonine 1116 bears the Phosphothreonine; by PKC mark. Residues 1118-1220 (IRVVNAFRSS…SPLHSLETSL (103 aa)) are required for basolateral membrane targeting. Phosphoserine occurs at positions 1140 and 1155. Residues 1162-1220 (IDDTDAEDDAPTKRNSSPPPSPNKNNNAVDSGIHLTIEMNKSATSSSPGSPLHSLETSL) are disordered. Threonine 1165 carries the phosphothreonine modification. A Phosphoserine; by PKA modification is found at serine 1177. A phosphoserine mark is found at serine 1178 and serine 1182. Positions 1200 to 1220 (MNKSATSSSPGSPLHSLETSL) are enriched in polar residues.

The protein belongs to the cation transport ATPase (P-type) (TC 3.A.3) family. Type IIB subfamily. As to quaternary structure, monomer. Dimer. Oligomer. Calmodulin binding. Interacts with PDZD11. Interacts with SLC35G1 and STIM1. Interacts with YWHAE; interacts with the monomeric and dimeric forms of the YWHAE but prefer the monomer form; this interaction inhibits calcium-transporting ATPase activity. Interacts with NPTN; this interaction stabilizes ATP2B1 and increases ATPase activity; this interaction controls T cell calcium homeostasis following T cell activation. Interacts with EPB41; regulates small intestinal calcium absorption through regulation of membrane expression of ATP2B1. In terms of tissue distribution, isoform B is ubiquitously expressed. Isoforms A and E have only been found in brain cortex. Isoform C is found in brain cortex, skeletal muscle and heart muscle. Isoform D has only been found in fetal skeletal muscle. Isoform K has been found in small intestine and liver. Isoform B is expressed in hair cells of inner ear.

The protein localises to the cell membrane. The protein resides in the basolateral cell membrane. Its subcellular location is the synapse. It localises to the presynaptic cell membrane. It is found in the cytoplasmic vesicle. The protein localises to the secretory vesicle. The protein resides in the synaptic vesicle membrane. The enzyme catalyses Ca(2+)(in) + ATP + H2O = Ca(2+)(out) + ADP + phosphate + H(+). Functionally, catalyzes the hydrolysis of ATP coupled with the transport of calcium from the cytoplasm to the extracellular space thereby maintaining intracellular calcium homeostasis. Plays a role in blood pressure regulation through regulation of intracellular calcium concentration and nitric oxide production leading to regulation of vascular smooth muscle cells vasoconstriction. Positively regulates bone mineralization through absorption of calcium from the intestine. Plays dual roles in osteoclast differentiation and survival by regulating RANKL-induced calcium oscillations in preosteoclasts and mediating calcium extrusion in mature osteoclasts. Regulates insulin sensitivity through calcium/calmodulin signaling pathway by regulating AKT1 activation and NOS3 activation in endothelial cells. May play a role in synaptic transmission by modulating calcium and proton dynamics at the synaptic vesicles. This is Plasma membrane calcium-transporting ATPase 1 from Rattus norvegicus (Rat).